Here is a 203-residue protein sequence, read N- to C-terminus: Twist-related protein 1 (203 aa).

Over residues 1-18 the composition is skewed to low complexity; the sequence is MMQDVSSSPVSPADDSLS. The segment at 1-106 is disordered; that stretch reads MMQDVSSSPV…GGGSPQSYEE (106 aa). The segment covering 34–43 has biased composition (basic residues); sequence RGGRKRRSSS. Composition is skewed to gly residues over residues 47 to 66 and 81 to 100; these read AGGG…GGDE and GCGG…GGGS. Positions 109 to 160 constitute a bHLH domain; sequence TQRVMANVRERQRTQSLNEAFAALRKIIPTLPSDKLSKIQTLKLAARYIDFL. Residues 162–192 form a sufficient for transactivation activity region; it reads QVLQSDELDSKMASCSYVAHERLSYAFSVWR.

In terms of assembly, efficient DNA binding requires dimerization with another bHLH protein. Homodimer or heterodimer with E proteins such as TCF3. ID1 binds preferentially to TCF3 but does not interact efficiently with TWIST1 so ID1 levels control the amount of TCF3 available to dimerize with TWIST and thus determine the type of dimer formed.

Its subcellular location is the nucleus. Its function is as follows. Acts as a transcriptional regulator. Inhibits myogenesis by sequestrating E proteins, inhibiting trans-activation by MEF2, and inhibiting DNA-binding by MYOD1 through physical interaction. This interaction probably involves the basic domains of both proteins. Also represses expression of pro-inflammatory cytokines such as TNFA and IL1B. Regulates cranial suture patterning and fusion. Activates transcription as a heterodimer with E proteins. Regulates gene expression differentially, depending on dimer composition. Homodimers induce expression of FGFR2 and POSTN while heterodimers repress FGFR2 and POSTN expression and induce THBS1 expression. Heterodimerization is also required for osteoblast differentiation. Represses the activity of the circadian transcriptional activator: NPAS2-BMAL1 heterodimer. This chain is Twist-related protein 1 (TWIST1), found in Pongo pygmaeus (Bornean orangutan).